A 184-amino-acid chain; its full sequence is Large ribosomal subunit protein uL6 (184 aa).

This sequence belongs to the universal ribosomal protein uL6 family. Part of the 50S ribosomal subunit.

In terms of biological role, this protein binds to the 23S rRNA, and is important in its secondary structure. It is located near the subunit interface in the base of the L7/L12 stalk, and near the tRNA binding site of the peptidyltransferase center. The chain is Large ribosomal subunit protein uL6 from Desulfurococcus amylolyticus (strain DSM 18924 / JCM 16383 / VKM B-2413 / 1221n) (Desulfurococcus kamchatkensis).